Reading from the N-terminus, the 122-residue chain is Small ribosomal subunit protein bS16 (122 aa).

Belongs to the bacterial ribosomal protein bS16 family.

The protein is Small ribosomal subunit protein bS16 of Prochlorococcus marinus (strain MIT 9313).